The primary structure comprises 361 residues: 45 kDa calcium-binding protein (361 aa).

The N-terminal stretch at 1–35 (MVWLVAMTPRQSSLCGLAAHGLWFLGLVLLMDATA) is a signal peptide. An N-linked (GlcNAc...) asparagine glycan is attached at Asn39. EF-hand domains lie at 97–132 (RSRR…KTAE) and 136–171 (EAVK…SKGH). A Phosphoserine modification is found at Ser98. Ca(2+) is bound by residues Asp110, Asn112, Asp114, Arg116, Glu121, Asp149, Asp151, Asp153, His155, and Glu160. A Phosphothreonine modification is found at Thr192. 4 EF-hand domains span residues 196–231 (LGNL…HSRG), 232–267 (MLKF…TVEN), 277–312 (WVKD…MNEY), and 313–348 (NALN…FTGS). Asp212 is a Ca(2+) binding site. Position 216 is a phosphothreonine (Thr216). The Ca(2+) site is built by Glu219, Asp245, Asp247, Asp249, Gln251, and Glu256. A Phosphothreonine modification is found at Thr264. Residues Asp290, Asn292, and Asp294 each coordinate Ca(2+). Phosphothreonine is present on Thr298. Ca(2+) is bound by residues Glu301, Asp326, Asn328, Asn330, His332, and Glu337. A necessary for intracellular retention in Golgi apparatus lumen region spans residues 308–361 (PMNEYNALNEAKQMIAIADENQNHHLEPEEILKYSEFFTGSKLMDYARNVHEEF).

This sequence belongs to the CREC family. Ubiquitous.

Its subcellular location is the golgi apparatus lumen. In terms of biological role, may regulate calcium-dependent activities in the endoplasmic reticulum lumen or post-ER compartment. The sequence is that of 45 kDa calcium-binding protein (Sdf4) from Mus musculus (Mouse).